A 561-amino-acid chain; its full sequence is Putative transport protein YbjL (561 aa).

Transmembrane regions (helical) follow at residues 8 to 28 (LLNG…LCLG), 32 to 52 (LGSV…LLGQ), 66 to 86 (FMLF…SIFF), 94 to 114 (MLAL…GKLF), and 158 to 178 (NLSL…IVGA). 2 RCK C-terminal domains span residues 200–288 (RGLD…SFRN) and 292–373 (VFDR…RIGF). 5 helical membrane passes run 383–403 (LLAF…TFQF), 406–426 (FSFG…LGFL), 447–467 (FGLM…INNG), 475–495 (MLIA…LFGA), and 540–560 (AIAN…WPGL).

Belongs to the AAE transporter (TC 2.A.81) family. YbjL subfamily.

It localises to the cell membrane. This Salmonella paratyphi C (strain RKS4594) protein is Putative transport protein YbjL.